Reading from the N-terminus, the 557-residue chain is MKSDSMKEGLARAPHRSLLKSIGYTDEEIGRPIIGIVNSANEIVPGHADLNKIARAVKDGVYMAGGTPVEFSTIGVCDGIAMNHIGMKYSLGSRELIADSVEIMATAHAFDALVMIPNCDKIVPGMLMAAARLNLPTIFISGGPMLAGRYPGKPEKKVDLITVFEAVGAVKSGRMAPEELAIIEDAACPTCGSCSGMFTANSMNCLTEAIGMGLPGNGTVPAVMSERVRMAKQAGMRILDLLKNGVTPDKIMTAKAFRNALAVDMALGCSTNTVLHLPAIAHEAGVSISLDLINEISGIAPHLCSLSPAGPNHIEDLNMAGGIQAVLKELARKSGLIDPDCLTVTGRTVGENIASARDADGQVIRTLETPHHAQGGLAVLFGNLAPDGCVVKQSAVVDKMLVHEGPARVFDSEEDATTAIMDGRIKKGDVLVIRYEGPKGGPGMREMLTPTSALAGMGLDSTVALITDGRFSGGSRGAAIGHVSPEAMEGGPIAVVKEGDTITIDIPKKKIGLKLDAGEIQNRLSGWNRPAPKITRGYMARYADQVSSANTGAIFKK.

Residue D78 coordinates Mg(2+). Position 119 (C119) interacts with [2Fe-2S] cluster. Mg(2+) contacts are provided by D120 and K121. N6-carboxylysine is present on K121. A [2Fe-2S] cluster-binding site is contributed by C194. E446 contributes to the Mg(2+) binding site. S472 (proton acceptor) is an active-site residue.

Belongs to the IlvD/Edd family. In terms of assembly, homodimer. [2Fe-2S] cluster serves as cofactor. Mg(2+) is required as a cofactor.

It catalyses the reaction (2R)-2,3-dihydroxy-3-methylbutanoate = 3-methyl-2-oxobutanoate + H2O. The enzyme catalyses (2R,3R)-2,3-dihydroxy-3-methylpentanoate = (S)-3-methyl-2-oxopentanoate + H2O. The protein operates within amino-acid biosynthesis; L-isoleucine biosynthesis; L-isoleucine from 2-oxobutanoate: step 3/4. Its pathway is amino-acid biosynthesis; L-valine biosynthesis; L-valine from pyruvate: step 3/4. In terms of biological role, functions in the biosynthesis of branched-chain amino acids. Catalyzes the dehydration of (2R,3R)-2,3-dihydroxy-3-methylpentanoate (2,3-dihydroxy-3-methylvalerate) into 2-oxo-3-methylpentanoate (2-oxo-3-methylvalerate) and of (2R)-2,3-dihydroxy-3-methylbutanoate (2,3-dihydroxyisovalerate) into 2-oxo-3-methylbutanoate (2-oxoisovalerate), the penultimate precursor to L-isoleucine and L-valine, respectively. The chain is Dihydroxy-acid dehydratase from Desulfosudis oleivorans (strain DSM 6200 / JCM 39069 / Hxd3) (Desulfococcus oleovorans).